Here is a 502-residue protein sequence, read N- to C-terminus: Protein nucleotidyltransferase YdiU (502 aa).

ATP is bound by residues glycine 98, glycine 100, arginine 101, lysine 121, aspartate 133, glycine 134, arginine 184, and arginine 191. Catalysis depends on aspartate 260, which acts as the Proton acceptor. Residues asparagine 261 and aspartate 270 each coordinate Mg(2+). Aspartate 270 is an ATP binding site.

This sequence belongs to the SELO family. It depends on Mg(2+) as a cofactor. Mn(2+) is required as a cofactor.

The catalysed reaction is L-seryl-[protein] + ATP = 3-O-(5'-adenylyl)-L-seryl-[protein] + diphosphate. The enzyme catalyses L-threonyl-[protein] + ATP = 3-O-(5'-adenylyl)-L-threonyl-[protein] + diphosphate. It carries out the reaction L-tyrosyl-[protein] + ATP = O-(5'-adenylyl)-L-tyrosyl-[protein] + diphosphate. It catalyses the reaction L-histidyl-[protein] + UTP = N(tele)-(5'-uridylyl)-L-histidyl-[protein] + diphosphate. The catalysed reaction is L-seryl-[protein] + UTP = O-(5'-uridylyl)-L-seryl-[protein] + diphosphate. The enzyme catalyses L-tyrosyl-[protein] + UTP = O-(5'-uridylyl)-L-tyrosyl-[protein] + diphosphate. Its function is as follows. Nucleotidyltransferase involved in the post-translational modification of proteins. It can catalyze the addition of adenosine monophosphate (AMP) or uridine monophosphate (UMP) to a protein, resulting in modifications known as AMPylation and UMPylation. This is Protein nucleotidyltransferase YdiU from Rhizobium rhizogenes (strain K84 / ATCC BAA-868) (Agrobacterium radiobacter).